Reading from the N-terminus, the 345-residue chain is Beta-2-glycoprotein 1 (345 aa).

The signal sequence occupies residues 1-19 (MPPPALVLLLGFLCHVAIA). Sushi domains follow at residues 21 to 81 (RTCP…KCMP), 82 to 139 (RVCP…VCAP), 140 to 202 (ITCP…ECRE), and 203 to 262 (VRCP…SCKA). 11 cysteine pairs are disulfide-bonded: cysteine 23/cysteine 66, cysteine 51/cysteine 79, cysteine 84/cysteine 124, cysteine 110/cysteine 137, cysteine 142/cysteine 188, cysteine 174/cysteine 200, cysteine 205/cysteine 248, cysteine 234/cysteine 260, cysteine 264/cysteine 315, cysteine 300/cysteine 325, and cysteine 307/cysteine 345. Threonine 33 carries O-linked (GalNAc...) threonine glycosylation. N-linked (GlcNAc...) asparagine glycosylation occurs at asparagine 92. N-linked (GlcNAc...) asparagine glycans are attached at residues asparagine 162, asparagine 183, and asparagine 193. Asparagine 253 is a glycosylation site (N-linked (GlcNAc...) asparagine). Residues 263 to 345 (SCKLSIKRAT…KTDASDVKPC (83 aa)) are sushi-like.

As to expression, expressed by the liver and secreted in plasma.

It is found in the secreted. Binds to various kinds of negatively charged substances such as heparin, phospholipids, and dextran sulfate. May prevent activation of the intrinsic blood coagulation cascade by binding to phospholipids on the surface of damaged cells. The protein is Beta-2-glycoprotein 1 (APOH) of Bos taurus (Bovine).